A 146-amino-acid chain; its full sequence is MANERTLSIIKPDGVEKGVIGQVIARFEKAGLKPIAMKMTHLSQAEAEGFYAVHKARPFFNDLVKFMTSGPVVLMVLEGEGAVAKNREIMGATDPAKAAAGTIRKDFASNIEKNTVHGSDSAENAKIEVSYFFPETAIHTYEWKKA.

ATP contacts are provided by Lys11, Phe59, Arg87, Thr93, Arg104, and Asn114. The active-site Pros-phosphohistidine intermediate is the His117.

It belongs to the NDK family. Homotetramer. It depends on Mg(2+) as a cofactor.

It localises to the cytoplasm. The catalysed reaction is a 2'-deoxyribonucleoside 5'-diphosphate + ATP = a 2'-deoxyribonucleoside 5'-triphosphate + ADP. The enzyme catalyses a ribonucleoside 5'-diphosphate + ATP = a ribonucleoside 5'-triphosphate + ADP. In terms of biological role, major role in the synthesis of nucleoside triphosphates other than ATP. The ATP gamma phosphate is transferred to the NDP beta phosphate via a ping-pong mechanism, using a phosphorylated active-site intermediate. The protein is Nucleoside diphosphate kinase of Anaeromyxobacter sp. (strain Fw109-5).